The sequence spans 281 residues: Nuclear transcription factor Y subunit nfya-2 (281 aa).

Disordered regions lie at residues 1–27 (MNPR…ARPQ) and 163–261 (REMR…VQEE). The short motif at 150 to 173 (MVNPRQYKRIIKRREMRQKMEDSG) is the Subunit association domain (SAD) element. The span at 166–188 (RQKMEDSGRLPLERQKYMHESRR) shows a compositional bias: basic and acidic residues. The NFYA/HAP2-type DNA-binding region spans 180 to 204 (QKYMHESRRQHALKRRRTGGRFDAN). Residues 189-198 (QHALKRRRTG) are compositionally biased toward basic residues. Residues 204 to 220 (NAEAAAASSEPSISSAA) are compositionally biased toward low complexity.

The protein belongs to the NFYA/HAP2 subunit family. Forms a heterotrimeric transcription factor complex (nfya-2-NF-Y complex) composed of nfya-2, nfyb-1 and nfyc-1. Interacts with the nfyb-1 and nfyc-1 dimer; the interaction is required for subsequent binding to the 5'-CCAAT-3' box motif in DNA. Does not interact with either nfyb-1 or nfyc-1 in their monomeric form. Highly expressed in certain parts of the gonads. Expressed in the spermatheca, intestine and in some neurons in the head. Not expressed in the intestine, the hypodermis, body wall muscle surrounding the pseudocoelomic space, secretory cells in the pharyngeal terminal bulb wall, in the small ganglia surrounding the pharynx and in the neurons running anteriorly to the sensory organs in the head.

The protein localises to the nucleus. Its function is as follows. Component of the sequence-specific heterotrimeric transcription factor (nfya-2-NF-Y) which specifically recognizes a 5'-CCAAT-3' box motif found in the promoters of its target genes to regulate their expression and control cellular identity in particular tissue types. In association with the components in the nfya-2-NF-Y complex, may repress the expression of the T-box transcription factor tbx-2 throughout larval development, which most likely restricts its expression to certain tissues. In Caenorhabditis elegans, this protein is Nuclear transcription factor Y subunit nfya-2.